A 242-amino-acid polypeptide reads, in one-letter code: uncharacterized protein (242 aa).

This sequence belongs to the MtxX family.

This is an uncharacterized protein from Methanothermobacter thermautotrophicus (strain ATCC 29096 / DSM 1053 / JCM 10044 / NBRC 100330 / Delta H) (Methanobacterium thermoautotrophicum).